Reading from the N-terminus, the 224-residue chain is Oxalate oxidase GF-3.8 (224 aa).

The signal sequence occupies residues Met-1–Ser-23. Cys-33 and Cys-49 form a disulfide bridge. Positions Ser-63 to Glu-214 constitute a Cupin type-1 domain. Asn-70 and Asn-75 each carry an N-linked (GlcNAc...) asparagine glycan. The Mn(2+) site is built by His-111, His-113, Glu-118, and His-160.

Belongs to the germin family. In terms of assembly, oligomer (believed to be a pentamer but probably hexamer).

The protein localises to the secreted. It localises to the extracellular space. The protein resides in the apoplast. Its subcellular location is the cytoplasm. It is found in the cell wall. The enzyme catalyses oxalate + O2 + 2 H(+) = H2O2 + 2 CO2. Produces developmental and stress-related release of hydrogen peroxide in the apoplast. May play an important role in several aspects of plant growth and defense mechanisms. The sequence is that of Oxalate oxidase GF-3.8 from Triticum aestivum (Wheat).